A 224-amino-acid chain; its full sequence is uncharacterized protein (224 aa).

A signal peptide spans 1–17 (MFTILLYFLVLFWVTNA).

This is an uncharacterized protein from Caenorhabditis elegans.